A 336-amino-acid polypeptide reads, in one-letter code: Tryptophan--tRNA ligase (336 aa).

ATP is bound by residues 9–11 (QPS) and 17–18 (GN). The short motif at 10–18 (PSGTPTIGN) is the 'HIGH' region element. Asp134 contributes to the L-tryptophan binding site. ATP is bound by residues 146–148 (GDD), Ile189, and 198–202 (KMSKS). A 'KMSKS' region motif is present at residues 198–202 (KMSKS).

The protein belongs to the class-I aminoacyl-tRNA synthetase family. As to quaternary structure, homodimer.

It is found in the cytoplasm. The catalysed reaction is tRNA(Trp) + L-tryptophan + ATP = L-tryptophyl-tRNA(Trp) + AMP + diphosphate + H(+). Catalyzes the attachment of tryptophan to tRNA(Trp). The sequence is that of Tryptophan--tRNA ligase from Enterococcus faecalis (strain ATCC 700802 / V583).